A 419-amino-acid chain; its full sequence is uncharacterized protein (419 aa).

7 helical membrane-spanning segments follow: residues 16–36, 186–206, 235–255, 283–303, 318–338, 340–360, and 369–389; these read IMAK…LVVT, LVYI…SMIA, LLGI…AGSL, VIYA…LAAF, ITPM…GLNA, DAGF…IMFL, and FWQA…LAVI.

The protein to M.jannaschii MJ1024.

The protein resides in the cell membrane. This is an uncharacterized protein from Bacillus subtilis (strain 168).